The primary structure comprises 499 residues: Chaperone SurA (499 aa).

The signal sequence occupies residues 1–36 (MKRQEFALFSLTLMLSPWRRVLLPAVLAAMAGPALA). PpiC domains follow at residues 231 to 333 (PTEF…KLTA) and 352 to 450 (ITQT…QVEN).

Its subcellular location is the periplasm. The enzyme catalyses [protein]-peptidylproline (omega=180) = [protein]-peptidylproline (omega=0). Functionally, chaperone involved in the correct folding and assembly of outer membrane proteins. Recognizes specific patterns of aromatic residues and the orientation of their side chains, which are found more frequently in integral outer membrane proteins. May act in both early periplasmic and late outer membrane-associated steps of protein maturation. This Cupriavidus pinatubonensis (strain JMP 134 / LMG 1197) (Cupriavidus necator (strain JMP 134)) protein is Chaperone SurA.